Consider the following 192-residue polypeptide: Protein GrpE (192 aa).

The interval 1 to 34 is disordered; the sequence is MSSKEQKTPNEQVSEEMENTAEQQVEATQETGEC. A compositionally biased stretch (polar residues) spans 20-31; it reads TAEQQVEATQET.

The protein belongs to the GrpE family. Homodimer.

The protein localises to the cytoplasm. Functionally, participates actively in the response to hyperosmotic and heat shock by preventing the aggregation of stress-denatured proteins, in association with DnaK and GrpE. It is the nucleotide exchange factor for DnaK and may function as a thermosensor. Unfolded proteins bind initially to DnaJ; upon interaction with the DnaJ-bound protein, DnaK hydrolyzes its bound ATP, resulting in the formation of a stable complex. GrpE releases ADP from DnaK; ATP binding to DnaK triggers the release of the substrate protein, thus completing the reaction cycle. Several rounds of ATP-dependent interactions between DnaJ, DnaK and GrpE are required for fully efficient folding. In Yersinia pseudotuberculosis serotype I (strain IP32953), this protein is Protein GrpE.